The sequence spans 2140 residues: Dedicator of cytokinesis protein 7 (2140 aa).

S30, S180, and S182 each carry phosphoserine. The interval 138 to 183 is disordered; it reads FNPNTLDKQKERQKGLPKQVFESDEAPDGNSYQDDQDDLKRRSMSI. Residues 365 to 395 adopt a coiled-coil conformation; sequence FKEADATKNKEKLEKLKSQADQFCQRLGKYR. Position 381 is an N6-methyllysine (K381). T450 carries the post-translational modification Phosphothreonine. A Phosphoserine modification is found at S452. One can recognise a C2 DOCK-type domain in the interval 561–727; sequence RNLLYIYPQS…GVFNVEVVAV (167 aa). Residues S862, S864, S882, S888, S896, S900, and S905 each carry the phosphoserine modification. Positions 888–901 are enriched in low complexity; sequence SLNLNRSRSLSNSN. Residues 888-971 are disordered; that stretch reads SLNLNRSRSL…MSSHTETSSF (84 aa). Residues T907 and T909 each carry the phosphothreonine modification. A phosphoserine mark is found at S910, S929, S964, S1383, K1390, A1394, E1398, Y1421, S1425, R1429, S1430, S1432, S1434, and S1438. Residues 943–971 show a composition bias toward polar residues; sequence SNPSPSAESTQAMDRSCNRMSSHTETSSF. The DOCKER domain occupies 1678 to 2114; sequence KGYQTSPDLR…LQPLINRKIP (437 aa). K1962 is modified (N6-acetyllysine). Positions 2086-2112 form a coiled coil; the sequence is DQKEYQRELERNYHRLKEALQPLINRK. S2129 bears the Phosphoserine mark.

This sequence belongs to the DOCK family. As to quaternary structure, component of the DOCK7-induced septin displacement/DISP complex, at least composed of DOCK7, LRCH3 and MYO6. Interacts with TSC1. Interacts with nucleotide-free RAC1 and RAC3. Interacts with TACC3 and CRY1. Interacts with NOD2. As to expression, widely expressed.

The protein resides in the cell projection. The protein localises to the axon. Functionally, functions as a guanine nucleotide exchange factor (GEF), which activates Rac1 and Rac3 Rho small GTPases by exchanging bound GDP for free GTP. Does not have a GEF activity for CDC42. Required for STMN1 'Ser-15' phosphorylation during axon formation and consequently for neuronal polarization. As part of the DISP complex, may regulate the association of septins with actin and thereby regulate the actin cytoskeleton. Has a role in pigmentation. Involved in the regulation of cortical neurogenesis through the control of radial glial cells (RGCs) proliferation versus differentiation; negatively regulates the basal-to-apical interkinetic nuclear migration of RGCs by antagonizing the microtubule growth-promoting function of TACC3. The protein is Dedicator of cytokinesis protein 7 (DOCK7) of Homo sapiens (Human).